Reading from the N-terminus, the 534-residue chain is BEN domain-containing protein 4 (534 aa).

Disordered regions lie at residues 1-24, 48-128, and 287-322; these read MEEEMQPAEEGPSVPKIYKQRSPY, ELPH…AASS, and VHTLGGWTSPATSESHGHPSSSTLPEEEEEEDEEGY. Pro residues predominate over residues 53-63; the sequence is RAPPPPPPPFA. Residues 69–83 are compositionally biased toward polar residues; it reads SISSSEPPPQQFQAQ. Low complexity predominate over residues 91–109; sequence GRAAAAASSSSPSCTPATS. The segment covering 295–310 has biased composition (polar residues); the sequence is SPATSESHGHPSSSTL. The span at 311–321 shows a compositional bias: acidic residues; sequence PEEEEEEDEEG. A coiled-coil region spans residues 324-351; that stretch reads PRCQELEQEVISLQQENEELRRKLESIP. The BEN domain occupies 390 to 498; sequence NYPVYITSKQ…DAVGHARQGR (109 aa).

This chain is BEN domain-containing protein 4 (BEND4), found in Homo sapiens (Human).